The following is a 626-amino-acid chain: Chaperone protein HtpG (626 aa).

The tract at residues 1 to 343 (MHKQTLSFQA…SADLPLNVSR (343 aa)) is a; substrate-binding. Positions 344–558 (ELLQESRAVK…DGDMSTQLAR (215 aa)) are b. The tract at residues 559-626 (MLKQAGQAVP…YVKRVNALLV (68 aa)) is c.

The protein belongs to the heat shock protein 90 family. As to quaternary structure, homodimer.

The protein resides in the cytoplasm. Molecular chaperone. Has ATPase activity. This Polaromonas sp. (strain JS666 / ATCC BAA-500) protein is Chaperone protein HtpG.